A 176-amino-acid chain; its full sequence is Large ribosomal subunit protein uL6 (176 aa).

Over residues 151-169 (RPPEPYKGRGIKYTDEHIQ) the composition is skewed to basic and acidic residues. A disordered region spans residues 151–176 (RPPEPYKGRGIKYTDEHIQRKAGKTK).

Belongs to the universal ribosomal protein uL6 family. As to quaternary structure, part of the 50S ribosomal subunit.

Functionally, this protein binds to the 23S rRNA, and is important in its secondary structure. It is located near the subunit interface in the base of the L7/L12 stalk, and near the tRNA binding site of the peptidyltransferase center. The sequence is that of Large ribosomal subunit protein uL6 from Desulfosudis oleivorans (strain DSM 6200 / JCM 39069 / Hxd3) (Desulfococcus oleovorans).